Here is a 146-residue protein sequence, read N- to C-terminus: Ecotin-like protein 1 (146 aa).

The protein belongs to the protease inhibitor I11 (ecotin) family.

The protein is Ecotin-like protein 1 (ISP1) of Leishmania infantum.